The primary structure comprises 222 residues: Small ribosomal subunit protein uS3 (222 aa).

A KH type-2 domain is found at 39-108 (IRKFVKNKLS…NVLINIVEVK (70 aa)).

Belongs to the universal ribosomal protein uS3 family. Part of the 30S ribosomal subunit. Forms a tight complex with proteins S10 and S14.

Binds the lower part of the 30S subunit head. Binds mRNA in the 70S ribosome, positioning it for translation. In Clostridium acetobutylicum (strain ATCC 824 / DSM 792 / JCM 1419 / IAM 19013 / LMG 5710 / NBRC 13948 / NRRL B-527 / VKM B-1787 / 2291 / W), this protein is Small ribosomal subunit protein uS3.